The primary structure comprises 519 residues: Cytosol aminopeptidase (519 aa).

Ser-42 is subject to Phosphoserine. Position 45 is an N6-succinyllysine (Lys-45). Ser-54 is subject to Phosphoserine. An N6-succinyllysine mark is found at Lys-61 and Lys-103. Phosphoserine is present on residues Ser-180 and Ser-194. Zn(2+)-binding residues include Leu-202, Met-203, and Thr-205. The residue at position 221 (Lys-221) is an N6-acetyllysine; alternate. An N6-succinyllysine; alternate modification is found at Lys-221. Ser-238 is modified (phosphoserine). Positions 282 and 287 each coordinate Zn(2+). Residues Lys-282, Asp-287, Ser-292, and Lys-294 each coordinate substrate. Asp-287 is a Mg(2+) binding site. The active site involves Lys-294. 4 residues coordinate Zn(2+): Arg-303, Asp-305, Asp-364, and Glu-366. Substrate is bound by residues Asp-305 and Asp-364. Mg(2+)-binding residues include Asp-364 and Glu-366. Arg-368 is an active-site residue. Lys-455 carries the post-translational modification N6-acetyllysine; alternate. Lys-455 bears the N6-succinyllysine; alternate mark. At Lys-476 the chain carries N6-succinyllysine. Lys-489 bears the N6-acetyllysine; alternate mark. An N6-succinyllysine; alternate modification is found at Lys-489.

This sequence belongs to the peptidase M17 family. Homohexamer. Zn(2+) serves as cofactor. Mn(2+) is required as a cofactor.

Its subcellular location is the cytoplasm. It carries out the reaction Release of an N-terminal amino acid, Xaa-|-Yaa-, in which Xaa is preferably Leu, but may be other amino acids including Pro although not Arg or Lys, and Yaa may be Pro. Amino acid amides and methyl esters are also readily hydrolyzed, but rates on arylamides are exceedingly low.. The enzyme catalyses an S-substituted L-cysteinylglycine + H2O = an S-substituted L-cysteine + glycine. The catalysed reaction is L-cysteinylglycine + H2O = L-cysteine + glycine. It catalyses the reaction S-benzyl-L-cysteinylglycine + H2O = S-benzyl-L-cysteine + glycine. It carries out the reaction Release of N-terminal proline from a peptide.. In terms of biological role, cytosolic metallopeptidase that catalyzes the removal of unsubstituted N-terminal hydrophobic amino acids from various peptides. The presence of Zn(2+) ions is essential for the peptidase activity, and the association with other cofactors can modulate the substrate spectificity of the enzyme. For instance, in the presence of Mn(2+), it displays a specific Cys-Gly hydrolyzing activity of Cys-Gly-S-conjugates. Involved in the metabolism of glutathione and in the degradation of glutathione S-conjugates, which may play a role in the control of the cell redox status. This chain is Cytosol aminopeptidase, found in Homo sapiens (Human).